Here is a 71-residue protein sequence, read N- to C-terminus: Conotoxin AbVIG (71 aa).

The first 17 residues, 1–17 (VLIIAVLFLTACQLTTA), serve as a signal peptide directing secretion. Positions 18–40 (ETSSRGKQKHRALRSTDKNSRMT) are excised as a propeptide. Disulfide bonds link C43–C57, C50–C61, and C56–C68.

This sequence belongs to the conotoxin O1 superfamily. Expressed by the venom duct.

It is found in the secreted. This is Conotoxin AbVIG from Conus abbreviatus (Abbreviated cone).